The following is a 338-amino-acid chain: Aspartate carbamoyltransferase catalytic subunit (338 aa).

Residues arginine 59 and threonine 60 each coordinate carbamoyl phosphate. Position 87 (lysine 87) interacts with L-aspartate. Residues arginine 109, histidine 142, and glutamine 145 each contribute to the carbamoyl phosphate site. The L-aspartate site is built by arginine 182 and arginine 253. Glycine 294 and proline 295 together coordinate carbamoyl phosphate.

This sequence belongs to the aspartate/ornithine carbamoyltransferase superfamily. ATCase family. Heterododecamer (2C3:3R2) of six catalytic PyrB chains organized as two trimers (C3), and six regulatory PyrI chains organized as three dimers (R2).

It catalyses the reaction carbamoyl phosphate + L-aspartate = N-carbamoyl-L-aspartate + phosphate + H(+). It functions in the pathway pyrimidine metabolism; UMP biosynthesis via de novo pathway; (S)-dihydroorotate from bicarbonate: step 2/3. Its function is as follows. Catalyzes the condensation of carbamoyl phosphate and aspartate to form carbamoyl aspartate and inorganic phosphate, the committed step in the de novo pyrimidine nucleotide biosynthesis pathway. This is Aspartate carbamoyltransferase catalytic subunit from Prochlorococcus marinus subsp. pastoris (strain CCMP1986 / NIES-2087 / MED4).